The following is an 815-amino-acid chain: Bifunctional purine biosynthetic protein purD (815 aa).

Positions 6–452 are GARS; the sequence is NILVIGSGSR…YRKDIGQKAL (447 aa). The ATP-grasp domain maps to 113-343; the sequence is KDFMARNNIP…LFEIVLACIE (231 aa). 139-200 is a binding site for ATP; it reads IESLNYKIVL…EEFLDGEECS (62 aa). Residues Glu313 and Asn315 each coordinate Mg(2+). The interval 469-801 is AIRS; that stretch reads VSYSESGVDI…KVYKIGKIIN (333 aa).

The protein in the N-terminal section; belongs to the GARS family. It in the C-terminal section; belongs to the AIR synthase family. It depends on Mg(2+) as a cofactor. The cofactor is Mn(2+).

It is found in the cytoplasm. The protein localises to the cytosol. It catalyses the reaction 5-phospho-beta-D-ribosylamine + glycine + ATP = N(1)-(5-phospho-beta-D-ribosyl)glycinamide + ADP + phosphate + H(+). The enzyme catalyses 2-formamido-N(1)-(5-O-phospho-beta-D-ribosyl)acetamidine + ATP = 5-amino-1-(5-phospho-beta-D-ribosyl)imidazole + ADP + phosphate + H(+). It functions in the pathway purine metabolism; IMP biosynthesis via de novo pathway; 5-amino-1-(5-phospho-D-ribosyl)imidazole from N(2)-formyl-N(1)-(5-phospho-D-ribosyl)glycinamide: step 2/2. It participates in purine metabolism; IMP biosynthesis via de novo pathway; N(1)-(5-phospho-D-ribosyl)glycinamide from 5-phospho-alpha-D-ribose 1-diphosphate: step 2/2. In terms of biological role, catalyzes the second and fifth step in the 'de novo' purine biosynthesis pathway; contains phosphoribosylamine--glycine ligase (GARS) and phosphoribosylformylglycinamidine cyclo-ligase (AIRS) activities. The protein is Bifunctional purine biosynthetic protein purD (purD) of Dictyostelium discoideum (Social amoeba).